Consider the following 101-residue polypeptide: Putative pterin-4-alpha-carbinolamine dehydratase (101 aa).

It belongs to the pterin-4-alpha-carbinolamine dehydratase family.

The enzyme catalyses (4aS,6R)-4a-hydroxy-L-erythro-5,6,7,8-tetrahydrobiopterin = (6R)-L-erythro-6,7-dihydrobiopterin + H2O. The protein is Putative pterin-4-alpha-carbinolamine dehydratase of Rhodopseudomonas palustris (strain BisB18).